The following is a 169-amino-acid chain: Large ribosomal subunit protein uL10 (169 aa).

It belongs to the universal ribosomal protein uL10 family. In terms of assembly, part of the ribosomal stalk of the 50S ribosomal subunit. The N-terminus interacts with L11 and the large rRNA to form the base of the stalk. The C-terminus forms an elongated spine to which L12 dimers bind in a sequential fashion forming a multimeric L10(L12)X complex.

Functionally, forms part of the ribosomal stalk, playing a central role in the interaction of the ribosome with GTP-bound translation factors. This chain is Large ribosomal subunit protein uL10, found in Rickettsia bellii (strain OSU 85-389).